Reading from the N-terminus, the 445-residue chain is UPF0210 protein STK_02450 (445 aa).

The protein belongs to the UPF0210 family.

In Sulfurisphaera tokodaii (strain DSM 16993 / JCM 10545 / NBRC 100140 / 7) (Sulfolobus tokodaii), this protein is UPF0210 protein STK_02450.